The chain runs to 419 residues: Tyrosine--tRNA ligase (419 aa).

Tyr42 provides a ligand contact to L-tyrosine. A 'HIGH' region motif is present at residues 47-56 (ATAPSLHVGS). L-tyrosine is bound by residues Tyr179 and Gln183. A 'KMSKS' region motif is present at residues 239 to 243 (KMGKT). Lys242 provides a ligand contact to ATP. One can recognise an S4 RNA-binding domain in the interval 353–418 (IVLANLFADA…GKKKIVLVKP (66 aa)).

Belongs to the class-I aminoacyl-tRNA synthetase family. TyrS type 1 subfamily. In terms of assembly, homodimer.

The protein resides in the cytoplasm. The catalysed reaction is tRNA(Tyr) + L-tyrosine + ATP = L-tyrosyl-tRNA(Tyr) + AMP + diphosphate + H(+). Its function is as follows. Catalyzes the attachment of tyrosine to tRNA(Tyr) in a two-step reaction: tyrosine is first activated by ATP to form Tyr-AMP and then transferred to the acceptor end of tRNA(Tyr). The protein is Tyrosine--tRNA ligase of Caulobacter sp. (strain K31).